Here is a 147-residue protein sequence, read N- to C-terminus: Large ribosomal subunit protein uL15 (147 aa).

Residues 1–55 form a disordered region; the sequence is MKLHEIAPQPGSTKRRRRVGRGVSAGQGASCGLGMRGQKSRSGTGTRPGFEGGQM. A compositionally biased stretch (gly residues) spans 23–35; sequence VSAGQGASCGLGM.

This sequence belongs to the universal ribosomal protein uL15 family. Part of the 50S ribosomal subunit.

In terms of biological role, binds to the 23S rRNA. This Microcystis aeruginosa (strain NIES-843 / IAM M-2473) protein is Large ribosomal subunit protein uL15.